Here is a 911-residue protein sequence, read N- to C-terminus: Valine--tRNA ligase (911 aa).

The short motif at 57–67 (PTVSGSLHVGH) is the 'HIGH' region element. Residues 599–603 (KMSKS) carry the 'KMSKS' region motif. Position 602 (K602) interacts with ATP. The disordered stretch occupies residues 882–911 (EESAAEDAPETEVAVEASELGEPPVKKPKH).

Belongs to the class-I aminoacyl-tRNA synthetase family. ValS type 2 subfamily. As to quaternary structure, monomer.

The protein resides in the cytoplasm. The catalysed reaction is tRNA(Val) + L-valine + ATP = L-valyl-tRNA(Val) + AMP + diphosphate. Catalyzes the attachment of valine to tRNA(Val). As ValRS can inadvertently accommodate and process structurally similar amino acids such as threonine, to avoid such errors, it has a 'posttransfer' editing activity that hydrolyzes mischarged Thr-tRNA(Val) in a tRNA-dependent manner. The polypeptide is Valine--tRNA ligase (Bifidobacterium longum subsp. infantis (strain ATCC 15697 / DSM 20088 / JCM 1222 / NCTC 11817 / S12)).